We begin with the raw amino-acid sequence, 381 residues long: Acetylornithine deacetylase (381 aa).

Position 79 (His-79) interacts with Zn(2+). Asp-81 is a catalytic residue. Asp-111 serves as a coordination point for Zn(2+). Glu-143 is a catalytic residue. Zn(2+) contacts are provided by Glu-144, Glu-168, and His-354.

This sequence belongs to the peptidase M20A family. ArgE subfamily. As to quaternary structure, homodimer. Requires Zn(2+) as cofactor. Co(2+) serves as cofactor. It depends on glutathione as a cofactor.

It is found in the cytoplasm. It catalyses the reaction N(2)-acetyl-L-ornithine + H2O = L-ornithine + acetate. The protein operates within amino-acid biosynthesis; L-arginine biosynthesis; L-ornithine from N(2)-acetyl-L-ornithine (linear): step 1/1. Functionally, catalyzes the hydrolysis of the amide bond of N(2)-acetylated L-amino acids. Cleaves the acetyl group from N-acetyl-L-ornithine to form L-ornithine, an intermediate in L-arginine biosynthesis pathway, and a branchpoint in the synthesis of polyamines. This Buchnera aphidicola subsp. Schizaphis graminum (strain Sg) protein is Acetylornithine deacetylase.